The following is a 344-amino-acid chain: Aromatic amino acid aminotransferase (344 aa).

K213 is subject to N6-(pyridoxal phosphate)lysine.

The protein belongs to the class-II pyridoxal-phosphate-dependent aminotransferase family. As to quaternary structure, homodimer. It depends on pyridoxal 5'-phosphate as a cofactor.

The catalysed reaction is an aromatic L-alpha-amino acid + 2-oxoglutarate = an aromatic oxo-acid + L-glutamate. Its function is as follows. Aminotransferase that catalyzes the conversion of aromatic amino acids and 2-oxoglutarate into corresponding aromatic oxo acids and L-glutamate. The polypeptide is Aromatic amino acid aminotransferase (Corynebacterium diphtheriae (strain ATCC 700971 / NCTC 13129 / Biotype gravis)).